Reading from the N-terminus, the 663-residue chain is MNPADHPSVYVAGYLALYGADESDELNIDRKDIRAAIPTPAPLPINIDHRRDCTVGAVLALIDDEHGLFFLGKINCPVMVRTLETAASQEIFSELDNLKPDDKLLYIITNYLPSVSLSSRRLAPGETADETFLAHVALCLLGKRIGTIVTYDLTPEEAIEPFRKLSPNSKATLLSQGKETERLLGEMVWYPSKNAITKALLGTAVNNMLLRDRWQIISERRRMAGITGQKYLQASSFTALTDSMTSNNVSVTHPICENANPGNIQKDEEMQVCISPAQTSETLNAGVLSGCNDFHRLPHSDPASTSDQTNLQSLIEPSMNTQSSRPPGDDFIWVPIKSYNQLVSRNASQPTNIPDIAITSNQPPFIPPALMNTSISGQHSIPSGYAQYGYPTPVGTHNSLLPLGPVNQMGGFQYGPQVYPLSYGQSPLEAKLTALLECMTKEKRPVDEEHRGDDMHTTREERGRRGRKRPYEFDRSIESDLYYPGEFRRSNFSPPQASSMKYEETTGGRHDLSQTGPVLNSLMGAVTSLQKEVERLNGGNLPISNAQSSYGVPNGMHAPVYYSYPPPGTHPTVSWPMGVERPMPSTEGKTSTNSTVIPVPVSDPEAGRNVPITATISQERSDGIQKESIEQSRDTMNASAVAGIHRTSDAGVDVFINQMMAHQ.

Active-site charge relay system residues include histidine 49, serine 116, and histidine 135. Positions 329-348 (DDFIWVPIKSYNQLVSRNAS) are interaction with pAP. Disordered regions lie at residues 444-471 (RPVDEEHRGDDMHTTREERGRRGRKRPY), 486-512 (EFRRSNFSPPQASSMKYEETTGGRHDL), and 583-608 (MPSTEGKTSTNSTVIPVPVSDPEAGR). Positions 490-499 (SNFSPPQASS) are enriched in polar residues. Residues 501–512 (KYEETTGGRHDL) are compositionally biased toward basic and acidic residues. Polar residues predominate over residues 587-596 (EGKTSTNSTV). The interaction with major capsid protein stretch occupies residues 643-663 (GIHRTSDAGVDVFINQMMAHQ).

This sequence belongs to the herpesviridae capsid scaffolding protein family. As to quaternary structure, homomultimer. Interacts with major capsid protein. Exists in a monomer-dimer equilibrium with the dimer being the active species. In terms of processing, capsid scaffolding protein is cleaved by assemblin after formation of the spherical procapsid. As a result, the capsid obtains its mature, icosahedral shape. Cleavages occur at two or more sites: release (R-site) and maturation (M-site).

It is found in the host cytoplasm. The protein localises to the host nucleus. It carries out the reaction Cleaves -Ala-|-Ser- and -Ala-|-Ala- bonds in the scaffold protein.. Acts as a scaffold protein by binding major capsid protein in the cytoplasm, inducing the nuclear localization of both proteins. Multimerizes in the nucleus such as major capsid protein forms the icosahedral T=16 capsid. Autocatalytic cleavage releases the assembly protein, and subsequently abolishes interaction with major capsid protein. Cleavages products are evicted from the capsid before or during DNA packaging. In terms of biological role, protease that plays an essential role in virion assembly within the nucleus. Catalyzes the cleavage of the assembly protein after formation of the spherical procapsid. By that cleavage, the capsid matures and gains its icosahedral shape. The cleavage sites seem to include -Ala-Ser-, -Ala-Ala-, as well as Ala-Thr bonds. Assemblin and cleavages products are evicted from the capsid before or during DNA packaging. Its function is as follows. Plays a major role in capsid assembly. Acts as a scaffold protein by binding major capsid protein. Multimerizes in the nucleus such as major capsid protein forms the icosahedral T=16 capsid. Cleaved by assemblin after capsid completion. The cleavages products are evicted from the capsid before or during DNA packaging. This Gallid herpesvirus 2 (strain Chicken/Md5/ATCC VR-987) (GaHV-2) protein is Capsid scaffolding protein (MDV038).